The sequence spans 157 residues: ATP synthase subunit b', chloroplastic (157 aa).

Residues 26–43 (LMASQFLLIMLILDITFY) traverse the membrane as a helical segment.

Belongs to the ATPase B chain family. As to quaternary structure, F-type ATPases have 2 components, F(1) - the catalytic core - and F(0) - the membrane proton channel. F(1) has five subunits: alpha(3), beta(3), gamma(1), delta(1), epsilon(1). F(0) has four main subunits: a(1), b(1), b'(1) and c(10-14). The alpha and beta chains form an alternating ring which encloses part of the gamma chain. F(1) is attached to F(0) by a central stalk formed by the gamma and epsilon chains, while a peripheral stalk is formed by the delta, b and b' chains.

Its subcellular location is the plastid. It is found in the chloroplast thylakoid membrane. Functionally, f(1)F(0) ATP synthase produces ATP from ADP in the presence of a proton or sodium gradient. F-type ATPases consist of two structural domains, F(1) containing the extramembraneous catalytic core and F(0) containing the membrane proton channel, linked together by a central stalk and a peripheral stalk. During catalysis, ATP synthesis in the catalytic domain of F(1) is coupled via a rotary mechanism of the central stalk subunits to proton translocation. Component of the F(0) channel, it forms part of the peripheral stalk, linking F(1) to F(0). The b'-subunit is a diverged and duplicated form of b found in plants and photosynthetic bacteria. This chain is ATP synthase subunit b', chloroplastic, found in Cyanidium caldarium (Red alga).